A 175-amino-acid polypeptide reads, in one-letter code: Endoribonuclease YbeY (175 aa).

3 residues coordinate Zn(2+): His-121, His-125, and His-131. The segment at 154-175 (PDPYSPAQQESQAQPENTELNP) is disordered. The segment covering 159–175 (PAQQESQAQPENTELNP) has biased composition (polar residues).

This sequence belongs to the endoribonuclease YbeY family. Zn(2+) is required as a cofactor.

It is found in the cytoplasm. In terms of biological role, single strand-specific metallo-endoribonuclease involved in late-stage 70S ribosome quality control and in maturation of the 3' terminus of the 16S rRNA. In Alcanivorax borkumensis (strain ATCC 700651 / DSM 11573 / NCIMB 13689 / SK2), this protein is Endoribonuclease YbeY.